Here is a 484-residue protein sequence, read N- to C-terminus: Glutamyl-tRNA(Gln) amidotransferase subunit A (484 aa).

Residues K77 and S152 each act as charge relay system in the active site. The active-site Acyl-ester intermediate is the S176.

Belongs to the amidase family. GatA subfamily. As to quaternary structure, heterotrimer of A, B and C subunits.

The catalysed reaction is L-glutamyl-tRNA(Gln) + L-glutamine + ATP + H2O = L-glutaminyl-tRNA(Gln) + L-glutamate + ADP + phosphate + H(+). Its function is as follows. Allows the formation of correctly charged Gln-tRNA(Gln) through the transamidation of misacylated Glu-tRNA(Gln) in organisms which lack glutaminyl-tRNA synthetase. The reaction takes place in the presence of glutamine and ATP through an activated gamma-phospho-Glu-tRNA(Gln). The sequence is that of Glutamyl-tRNA(Gln) amidotransferase subunit A from Pseudomonas aeruginosa (strain ATCC 15692 / DSM 22644 / CIP 104116 / JCM 14847 / LMG 12228 / 1C / PRS 101 / PAO1).